The chain runs to 106 residues: Integration host factor subunit alpha (106 aa).

It belongs to the bacterial histone-like protein family. As to quaternary structure, heterodimer of an alpha and a beta chain.

In terms of biological role, this protein is one of the two subunits of integration host factor, a specific DNA-binding protein that functions in genetic recombination as well as in transcriptional and translational control. The chain is Integration host factor subunit alpha from Nitrobacter winogradskyi (strain ATCC 25391 / DSM 10237 / CIP 104748 / NCIMB 11846 / Nb-255).